The following is a 225-amino-acid chain: UPF0758 protein Bpet3149 (225 aa).

In terms of domain architecture, MPN spans 103 to 225 (AMSEPGSVKR…VVSMAELGLL (123 aa)). Zn(2+) is bound by residues histidine 174, histidine 176, and aspartate 187. The short motif at 174-187 (HNHPSGSAQPSQAD) is the JAMM motif element.

This sequence belongs to the UPF0758 family.

This Bordetella petrii (strain ATCC BAA-461 / DSM 12804 / CCUG 43448) protein is UPF0758 protein Bpet3149.